The sequence spans 311 residues: tRNA-cytidine(32) 2-sulfurtransferase (311 aa).

Residues 47–52 (SGGKDS) carry the PP-loop motif motif. Positions 122, 125, and 213 each coordinate [4Fe-4S] cluster.

The protein belongs to the TtcA family. Homodimer. It depends on Mg(2+) as a cofactor. [4Fe-4S] cluster serves as cofactor.

It localises to the cytoplasm. The enzyme catalyses cytidine(32) in tRNA + S-sulfanyl-L-cysteinyl-[cysteine desulfurase] + AH2 + ATP = 2-thiocytidine(32) in tRNA + L-cysteinyl-[cysteine desulfurase] + A + AMP + diphosphate + H(+). Its pathway is tRNA modification. Functionally, catalyzes the ATP-dependent 2-thiolation of cytidine in position 32 of tRNA, to form 2-thiocytidine (s(2)C32). The sulfur atoms are provided by the cysteine/cysteine desulfurase (IscS) system. The polypeptide is tRNA-cytidine(32) 2-sulfurtransferase (Salmonella dublin (strain CT_02021853)).